We begin with the raw amino-acid sequence, 329 residues long: Glycerol-3-phosphate dehydrogenase [NAD(P)+] (329 aa).

3 residues coordinate NADPH: Trp-11, Arg-30, and Lys-103. Lys-103, Gly-132, and Ser-134 together coordinate sn-glycerol 3-phosphate. Position 136 (Ala-136) interacts with NADPH. Sn-glycerol 3-phosphate contacts are provided by Lys-187, Asp-240, Ser-250, Arg-251, and Asn-252. The active-site Proton acceptor is Lys-187. NADPH is bound at residue Arg-251. The NADPH site is built by Val-275 and Glu-277.

The protein belongs to the NAD-dependent glycerol-3-phosphate dehydrogenase family.

It localises to the cytoplasm. The catalysed reaction is sn-glycerol 3-phosphate + NAD(+) = dihydroxyacetone phosphate + NADH + H(+). It catalyses the reaction sn-glycerol 3-phosphate + NADP(+) = dihydroxyacetone phosphate + NADPH + H(+). The protein operates within membrane lipid metabolism; glycerophospholipid metabolism. Functionally, catalyzes the reduction of the glycolytic intermediate dihydroxyacetone phosphate (DHAP) to sn-glycerol 3-phosphate (G3P), the key precursor for phospholipid synthesis. This chain is Glycerol-3-phosphate dehydrogenase [NAD(P)+], found in Methylobacillus flagellatus (strain ATCC 51484 / DSM 6875 / VKM B-1610 / KT).